Here is a 198-residue protein sequence, read N- to C-terminus: Virion membrane protein A17 precursor homolog (198 aa).

Topologically, residues 1–55 are virion surface; the sequence is MDNNYLNYYNVFEEFDAGAGIKEKELFTEEQQLSFLPKKGLGNGGFDGVERLYSN. A helical membrane pass occupies residues 56–76; the sequence is IINNNDIKSLLALIMLVFAIN. Residues 77–145 lie on the Intravirion side of the membrane; that stretch reads TNSLVALIFI…TSKISKGFKR (69 aa). The chain crosses the membrane as a helical span at residues 146 to 166; it reads AIDVVLLVILGFYIVKIYGID. At 167 to 198 the chain is on the virion surface side; that stretch reads RQISIPSRRYCRQMSGPSSLENLNAFQTHSNY. Tyr-198 carries the post-translational modification Phosphotyrosine.

Belongs to the chordopoxvirinae A17 family. As to quaternary structure, interacts (via N-terminus) with D13 scaffold; this interaction helps D13 to associate with membranes. Interacts with A14. Interacts with A27; this interaction allows A27 to be anchored in the mature virion (MV) membrane. Part of a complex composed of A17, A25, A26 and A27. Post-translationally, the 22 kDa precursor is probably cleaved by the I7 protease during virus maturation. Phosphorylated on tyrosine and threonine. Its phosphorylation state is regulated by the F10 kinase and the H1 phosphatase. Phosphorylation by F10 kinase seems to be required to form the membranes associated with IV.

Its subcellular location is the virion membrane. Functionally, envelope protein which participates in virus morphogenesis. Needed for an early step in viral crescent membrane formation by interacting with D13 scaffold protein. Its interaction with D13 scaffold protein leads to the formation of rigid, crescent-shaped membranes that assemble around the cytoplasmic virus factory. Membrane anchor for the protein A27. A17-A27 virus envelope protein might be involved in fusion or attachment, and can further associate to A26. This is Virion membrane protein A17 precursor homolog from Fowlpox virus (strain NVSL) (FPV).